Reading from the N-terminus, the 251-residue chain is MTEEKDEYGTIVVARVAMEENMFNPQPDIPRIRNDSTHSYQQPESMLEKLNTYYTLAVVIAQLTIGVLGNSLTLVADATRIFADHLELFQYDRAATPGKRLTEIITVGITNVILFLLFVAFLLTASGRAATMEFDINRLYLSIGTAMAMTANTLQTLCHFRTWQRERSYHSSLYTGSKRNQLMHGFVYHFIAYFVLVSSLLIIVNKDYLIADVITTYATSLLILANISSIGYQLYHEYFSLEHPQDEYEPI.

A run of 4 helical transmembrane segments spans residues 56 to 76, 104 to 124, 184 to 204, and 208 to 228; these read LAVVIAQLTIGVLGNSLTLVA, IITVGITNVILFLLFVAFLLT, HGFVYHFIAYFVLVSSLLIIV, and YLIADVITTYATSLLILANIS.

The protein resides in the membrane. This is an uncharacterized protein from Caenorhabditis elegans.